A 347-amino-acid chain; its full sequence is Anthranilate phosphoribosyltransferase (347 aa).

Residues Gly-88, 91-92 (GD), Thr-96, 98-101 (NIST), 116-124 (KHGGRSVSS), and Ser-128 each bind 5-phospho-alpha-D-ribose 1-diphosphate. Anthranilate is bound at residue Gly-88. Ser-100 serves as a coordination point for Mg(2+). An anthranilate-binding site is contributed by Arg-174. Mg(2+)-binding residues include Asp-233 and Glu-234.

Belongs to the anthranilate phosphoribosyltransferase family. In terms of assembly, homodimer. It depends on Mg(2+) as a cofactor.

The catalysed reaction is N-(5-phospho-beta-D-ribosyl)anthranilate + diphosphate = 5-phospho-alpha-D-ribose 1-diphosphate + anthranilate. Its pathway is amino-acid biosynthesis; L-tryptophan biosynthesis; L-tryptophan from chorismate: step 2/5. Catalyzes the transfer of the phosphoribosyl group of 5-phosphorylribose-1-pyrophosphate (PRPP) to anthranilate to yield N-(5'-phosphoribosyl)-anthranilate (PRA). The sequence is that of Anthranilate phosphoribosyltransferase from Polaromonas sp. (strain JS666 / ATCC BAA-500).